A 625-amino-acid polypeptide reads, in one-letter code: Glutamine--fructose-6-phosphate aminotransferase [isomerizing] (625 aa).

Cys-2 (nucleophile; for GATase activity) is an active-site residue. A Glutamine amidotransferase type-2 domain is found at 2 to 229 (CGLVGYVGQR…QDQAVVITAD (228 aa)). SIS domains lie at 298–437 (SDQE…ARGT) and 470–615 (LAYR…VDKP). The For Fru-6P isomerization activity role is filled by Lys-620.

As to quaternary structure, homodimer.

It is found in the cytoplasm. The catalysed reaction is D-fructose 6-phosphate + L-glutamine = D-glucosamine 6-phosphate + L-glutamate. Catalyzes the first step in hexosamine metabolism, converting fructose-6P into glucosamine-6P using glutamine as a nitrogen source. This chain is Glutamine--fructose-6-phosphate aminotransferase [isomerizing], found in Mycobacterium leprae (strain TN).